Here is a 545-residue protein sequence, read N- to C-terminus: Zinc finger protein 697 (545 aa).

Residues 1–143 are disordered; it reads MKQEDNQGVC…EQPAPPVLPW (143 aa). A Glycyl lysine isopeptide (Lys-Gly) (interchain with G-Cter in SUMO2) cross-link involves residue lysine 2. Acidic residues predominate over residues 23–36; that stretch reads DFEDSEDREGDPEE. Basic and acidic residues predominate over residues 45 to 55; it reads DTNKREGHPEP. 2 stretches are compositionally biased toward acidic residues: residues 79 to 94 and 118 to 135; these read LSEE…EDDQ and EDDD…EEEQ. 11 consecutive C2H2-type zinc fingers follow at residues 189 to 211, 261 to 283, 289 to 311, 317 to 339, 353 to 375, 381 to 403, 409 to 431, 437 to 459, 465 to 487, 493 to 515, and 521 to 543; these read TICP…QRIH, FRCG…LRLH, NLCA…RRLH, YPCP…RRAH, FACG…QRIH, HGCG…QRVH, YMCS…KRTH, YVCR…LRVH, FRCG…QRTH, YTCI…RRIH, and HKCA…QKLH.

The protein belongs to the krueppel C2H2-type zinc-finger protein family.

It is found in the nucleus. Functionally, RNA-interacting protein with a high number of miRNA targets. Acts as a damage-induced regulator of muscle remodeling by mediating the interferon gamma response in muscle cells. The protein is Zinc finger protein 697 of Homo sapiens (Human).